The chain runs to 76 residues: Large ribosomal subunit protein bL31 (76 aa).

Positions 16, 18, 37, and 40 each coordinate Zn(2+).

The protein belongs to the bacterial ribosomal protein bL31 family. Type A subfamily. In terms of assembly, part of the 50S ribosomal subunit. Zn(2+) serves as cofactor.

In terms of biological role, binds the 23S rRNA. The chain is Large ribosomal subunit protein bL31 from Solibacter usitatus (strain Ellin6076).